A 263-amino-acid chain; its full sequence is H-2 class II histocompatibility antigen, A-U beta chain (263 aa).

The N-terminal stretch at 1–27 is a signal peptide; that stretch reads MALQIPSLLLLAAVVVLMVLSSPGTEG. Residues 28-120 are beta-1; that stretch reads GDSERHFVVQ…TEVPTSLRRL (93 aa). At 28–224 the chain is on the extracellular side; the sequence is GDSERHFVVQ…RAQSESARSK (197 aa). Cystine bridges form between Cys42/Cys104 and Cys143/Cys199. A glycan (N-linked (GlcNAc...) asparagine) is linked at Asn46. Residues 121-214 form a beta-2 region; that stretch reads EQPNVVISLS…SLKSPITVEW (94 aa). Residues 123–211 enclose the Ig-like C1-type domain; it reads PNVVISLSRT…EHPSLKSPIT (89 aa). A connecting peptide region spans residues 215–224; sequence RAQSESARSK. The chain crosses the membrane as a helical span at residues 225–245; sequence MLSGIGGCVLGVIFLGLGLFI. Over 246 to 263 the chain is Cytoplasmic; the sequence is RHRSQKGPRGPPPAGLLQ.

It belongs to the MHC class II family.

The protein resides in the membrane. This chain is H-2 class II histocompatibility antigen, A-U beta chain, found in Mus musculus (Mouse).